The sequence spans 467 residues: Sexual differentiation process putative subtilase-type proteinase isp6 (467 aa).

An Inhibitor I9 domain is found at 86–176 (YIIVLQPDLS…AVERDQVVSI (91 aa)). The region spanning 186-467 (PWGLARISHK…NLLAFNGAQE (282 aa)) is the Peptidase S8 domain. Active-site charge relay system residues include aspartate 221, histidine 253, and serine 409.

The protein belongs to the peptidase S8 family.

This chain is Sexual differentiation process putative subtilase-type proteinase isp6 (isp6), found in Schizosaccharomyces pombe (strain 972 / ATCC 24843) (Fission yeast).